The following is a 220-amino-acid chain: MSDEKNKFTDASFENCDLKNPVDRDTLKKATDEFLKTHEAEIHSEVKEENNEVSDPLAALQDENKELKDQLLRLVADMENLRRRTARDVADAKAYSIANFARDMLSVSDNLNRALEAIPEGAKENDAGLKTLAEGVEMTERAMIAALERHGVQKIYPEGQKFDPHFHQAMFEIPNCDVPDNTVQQVVQAGYIIGERVLRPAIVGVAKGGTKGVPVESGSA.

The protein belongs to the GrpE family. Homodimer.

It localises to the cytoplasm. Functionally, participates actively in the response to hyperosmotic and heat shock by preventing the aggregation of stress-denatured proteins, in association with DnaK and GrpE. It is the nucleotide exchange factor for DnaK and may function as a thermosensor. Unfolded proteins bind initially to DnaJ; upon interaction with the DnaJ-bound protein, DnaK hydrolyzes its bound ATP, resulting in the formation of a stable complex. GrpE releases ADP from DnaK; ATP binding to DnaK triggers the release of the substrate protein, thus completing the reaction cycle. Several rounds of ATP-dependent interactions between DnaJ, DnaK and GrpE are required for fully efficient folding. This is Protein GrpE from Bartonella quintana (strain Toulouse) (Rochalimaea quintana).